The sequence spans 437 residues: Gamma-glutamyl phosphate reductase (437 aa).

It belongs to the gamma-glutamyl phosphate reductase family.

Its subcellular location is the cytoplasm. The enzyme catalyses L-glutamate 5-semialdehyde + phosphate + NADP(+) = L-glutamyl 5-phosphate + NADPH + H(+). It functions in the pathway amino-acid biosynthesis; L-proline biosynthesis; L-glutamate 5-semialdehyde from L-glutamate: step 2/2. Its function is as follows. Catalyzes the NADPH-dependent reduction of L-glutamate 5-phosphate into L-glutamate 5-semialdehyde and phosphate. The product spontaneously undergoes cyclization to form 1-pyrroline-5-carboxylate. This chain is Gamma-glutamyl phosphate reductase, found in Synechococcus sp. (strain CC9902).